The following is a 1237-amino-acid chain: Anion exchange protein 2 (1237 aa).

The interval 1 to 238 is disordered; it reads MSSAPRRPAS…YNLQERRRIG (238 aa). Residues 1–703 lie on the Cytoplasmic side of the membrane; sequence MSSAPRRPAS…SDFRDALDPQ (703 aa). Composition is skewed to basic and acidic residues over residues 38 to 48 and 57 to 74; these read LRTLGVERFEE and GGEEPGRSYGEEDFEYHR. Composition is skewed to basic residues over residues 75–84 and 93–109; these read QSSHHIHHPL and RRRKTPQGPGRKPRRRP. Ser-112, Ser-131, Ser-144, Ser-170, Ser-172, and Ser-239 each carry phosphoserine. Residues 119-132 show a composition bias toward acidic residues; the sequence is TIEEGEEDEEEASE. At Thr-253 the chain carries Phosphothreonine. Residue Lys-270 is modified to N6-methyllysine. A disordered region spans residues 285-316; it reads VRKNAKGSTQAAREGREPGPTPRARPRAPHKP. Position 439 is a phosphoserine (Ser-439). The segment at 445 to 466 is disordered; it reads SLLGHHHAQGTESDPHVTEPLI. The next 4 helical transmembrane spans lie at 704-727, 733-770, 790-812, and 822-843; these read CLAAVIFIYFAALSPAITFGGLLG, LIGVSELIMSTALQGVVFCLLGAQPLLVIGFSGPLLVF, VWIGFWLVFLALLMVALEGSFLV, and IFAFLISLIFIYETFYKLIKIF. The membrane (anion exchange) stretch occupies residues 704 to 1237; sequence CLAAVIFIYF…DEYNEMPMPV (534 aa). The Extracellular portion of the chain corresponds to 844–896; sequence QEHPLHGCSGSNDSEAGSSSSSNMTWATTILVPDNSSASGQSGQEKPRGQPNT. N-linked (GlcNAc...) asparagine glycosylation is found at Asn-855, Asn-866, and Asn-878. Residues 897–914 form a helical membrane-spanning segment; that stretch reads ALLSLVLMAGTFFIAFFL. At 915–929 the chain is on the cytoplasmic side; the sequence is RKFKNSRFFPGRIRR. 5 helical membrane passes run 930 to 950, 984 to 1006, 1032 to 1053, 1087 to 1132, and 1159 to 1195; these read VIGDFGVPIAILIMVLVDYSI, PFPVWMMVASLLPAVLVFILIFM, LLLIVAMGGICALFGLPWLAAA, VTGL…IQFY, and MHLFTALQLLCLALLWAVMSTAASLAFPFILILTVPL. Cys-1169 is lipidated: S-palmitoyl cysteine.

Belongs to the anion exchanger (TC 2.A.31) family. In terms of tissue distribution, expressed in the choroid plexus epithelium (at protein level). Expressed in the parotid gland and sublingual salivary gland acinar cells (at protein level). As to expression, widely expressed at similar levels in all tissues examined. Expressed in the testis. Predominantly expressed in stomach although they are also detected at lower levels in other tissues. Expressed in the testis. In terms of tissue distribution, stomach-specific. As to expression, expressed at slightly higher levels in lung and stomach than in other tissues.

The protein resides in the apical cell membrane. Its subcellular location is the basolateral cell membrane. The catalysed reaction is hydrogencarbonate(in) + chloride(out) = hydrogencarbonate(out) + chloride(in). Inhibited by 4,4'-diisothiocyanatostilbene-2,2'-disulfonic acid (DIDS) and acetazolamide. Muscarinic receptor stimulation enhances activity through a Ca(2+)-dependent mechanism. Functionally, sodium-independent anion exchanger which mediates the electroneutral exchange of chloride for bicarbonate ions across the cell membrane. Plays an important role in osteoclast differentiation and function. Regulates bone resorption and calpain-dependent actin cytoskeleton organization in osteoclasts via anion exchange-dependent control of pH. Essential for intracellular pH regulation in CD8(+) T-cells upon CD3 stimulation, modulating CD8(+) T-cell responses. In terms of biological role, plays a critical role in male fertility and spermiogenesis. This Mus musculus (Mouse) protein is Anion exchange protein 2 (Slc4a2).